We begin with the raw amino-acid sequence, 878 residues long: Alanine--tRNA ligase (878 aa).

Zn(2+) contacts are provided by His567, His571, Cys669, and His673.

It belongs to the class-II aminoacyl-tRNA synthetase family. Zn(2+) is required as a cofactor.

Its subcellular location is the cytoplasm. It catalyses the reaction tRNA(Ala) + L-alanine + ATP = L-alanyl-tRNA(Ala) + AMP + diphosphate. Its function is as follows. Catalyzes the attachment of alanine to tRNA(Ala) in a two-step reaction: alanine is first activated by ATP to form Ala-AMP and then transferred to the acceptor end of tRNA(Ala). Also edits incorrectly charged Ser-tRNA(Ala) and Gly-tRNA(Ala) via its editing domain. The polypeptide is Alanine--tRNA ligase (Rickettsia massiliae (strain Mtu5)).